A 152-amino-acid polypeptide reads, in one-letter code: Transcriptional regulator MraZ (152 aa).

SpoVT-AbrB domains are found at residues 5 to 52 and 81 to 124; these read ASAI…PLDE and AHEC…DEAA.

This sequence belongs to the MraZ family. Forms oligomers.

The protein resides in the cytoplasm. The protein localises to the nucleoid. In Shewanella violacea (strain JCM 10179 / CIP 106290 / LMG 19151 / DSS12), this protein is Transcriptional regulator MraZ.